Here is a 138-residue protein sequence, read N- to C-terminus: Small ribosomal subunit protein bS6 (138 aa).

The segment covering 97–121 has biased composition (basic and acidic residues); sequence TEQSEMLKAEENRSERRERRDRPDN. The disordered stretch occupies residues 97–138; it reads TEQSEMLKAEENRSERRERRDRPDNTDGSNENDSDSDNNADE. Residues 126-138 show a composition bias toward acidic residues; sequence NENDSDSDNNADE.

The protein belongs to the bacterial ribosomal protein bS6 family.

Binds together with bS18 to 16S ribosomal RNA. The protein is Small ribosomal subunit protein bS6 of Stutzerimonas stutzeri (strain A1501) (Pseudomonas stutzeri).